The chain runs to 270 residues: Interleukin-1 beta (270 aa).

The propeptide occupies 1–118 (MATVPEPTSE…VYDDDAFVCD (118 aa)).

This sequence belongs to the IL-1 family. In terms of assembly, monomer. In its precursor form, weakly interacts with full-length MEFV; the mature cytokine does not interact at all. Interacts with integrins ITGAV:ITGBV and ITGA5:ITGB1; integrin-binding is required for IL1B signaling. Interacts with cargo receptor TMED10; the interaction is direct and is required for the secretion of IL1B mature form. Interacts with HSP90AB1; the interaction facilitates cargo translocation into the ERGIC. Interacts with HSP90B1; the interaction facilitates cargo translocation into the ERGIC.

The protein localises to the cytoplasm. Its subcellular location is the cytosol. It localises to the secreted. It is found in the lysosome. The protein resides in the extracellular exosome. Potent pro-inflammatory cytokine. Initially discovered as the major endogenous pyrogen, induces prostaglandin synthesis, neutrophil influx and activation, T-cell activation and cytokine production, B-cell activation and antibody production, and fibroblast proliferation and collagen production. Promotes Th17 differentiation of T-cells. Synergizes with IL12/interleukin-12 to induce IFNG synthesis from T-helper 1 (Th1) cells. Plays a role in angiogenesis by inducing VEGF production synergistically with TNF and IL6. Involved in transduction of inflammation downstream of pyroptosis: its mature form is specifically released in the extracellular milieu by passing through the gasdermin-D (GSDMD) pore. This Eumetopias jubatus (Steller sea lion) protein is Interleukin-1 beta (IL1B).